Reading from the N-terminus, the 158-residue chain is C-type lectin lectoxin-Enh5 (158 aa).

The first 23 residues, M1 to G23, serve as a signal peptide directing secretion. Intrachain disulfides connect C26–C37, C54–C154, and C129–C146. The 123-residue stretch at R33–Q155 folds into the C-type lectin domain. Residues E119 to N121 carry the Mannose-binding motif. 3 residues coordinate Ca(2+): E127, N142, and D143.

The protein belongs to the true venom lectin family. Expressed by the venom gland.

The protein localises to the secreted. Functionally, mannose-binding lectin which recognizes specific carbohydrate structures and agglutinates a variety of animal cells by binding to cell-surface glycoproteins and glycolipids. May be a calcium-dependent lectin. The protein is C-type lectin lectoxin-Enh5 of Pseudoferania polylepis (Macleay's water snake).